Here is a 257-residue protein sequence, read N- to C-terminus: MRRPVVMGNWKLNGSKAMVTDLLNGLNAELEGVEGVDVVVAPPAMYLDLAERLIKEGGNKLILGAQNTDTHNSGAYTGDMSPAMLKDFGASHIIIGHSERRDYHKESDEFVAKKFAFLKENGLTPVFCIGETEAQNEAGETEAVCARQINAVIDAYGVEALNGAIIAYEPIWAIGTGKAATADDAQRIHASIRALIAAKDAAVAEQVIIQYGGSVKPENAASYFAQPDIDGALVGGASLDAKGFAAIAKAAAEAKKA.

9–11 (NWK) is a binding site for substrate. H97 (electrophile) is an active-site residue. The Proton acceptor role is filled by E169. Substrate is bound by residues G175, S214, and 235–236 (GG).

Belongs to the triosephosphate isomerase family. As to quaternary structure, homodimer.

The protein resides in the cytoplasm. The catalysed reaction is D-glyceraldehyde 3-phosphate = dihydroxyacetone phosphate. It functions in the pathway carbohydrate biosynthesis; gluconeogenesis. The protein operates within carbohydrate degradation; glycolysis; D-glyceraldehyde 3-phosphate from glycerone phosphate: step 1/1. Functionally, involved in the gluconeogenesis. Catalyzes stereospecifically the conversion of dihydroxyacetone phosphate (DHAP) to D-glyceraldehyde-3-phosphate (G3P). The sequence is that of Triosephosphate isomerase from Vibrio cholerae serotype O1 (strain ATCC 39315 / El Tor Inaba N16961).